The chain runs to 107 residues: U1-lycotoxin-Ls1b (107 aa).

The first 20 residues, 1-20 (MMKVLVVVALLVTLISYSSG), serve as a signal peptide directing secretion. Positions 21–41 (EGIDDLEADELLSLMANEQTR) are excised as a propeptide. Cystine bridges form between Cys-44–Cys-59, Cys-51–Cys-68, Cys-58–Cys-86, and Cys-70–Cys-84.

It belongs to the neurotoxin 19 (CSTX) family. 04 (U1-Lctx) subfamily. In terms of tissue distribution, expressed by the venom gland.

It localises to the secreted. The chain is U1-lycotoxin-Ls1b from Lycosa singoriensis (Wolf spider).